The following is a 181-amino-acid chain: Large ribosomal subunit protein uL5 (181 aa).

It belongs to the universal ribosomal protein uL5 family. As to quaternary structure, part of the 50S ribosomal subunit; part of the 5S rRNA/L5/L18/L25 subcomplex. Contacts the 5S rRNA and the P site tRNA. Forms a bridge to the 30S subunit in the 70S ribosome.

Functionally, this is one of the proteins that bind and probably mediate the attachment of the 5S RNA into the large ribosomal subunit, where it forms part of the central protuberance. In the 70S ribosome it contacts protein S13 of the 30S subunit (bridge B1b), connecting the 2 subunits; this bridge is implicated in subunit movement. Contacts the P site tRNA; the 5S rRNA and some of its associated proteins might help stabilize positioning of ribosome-bound tRNAs. The sequence is that of Large ribosomal subunit protein uL5 from Helicobacter pylori (strain Shi470).